The sequence spans 159 residues: Ribosomal RNA large subunit methyltransferase H (159 aa).

Residues glycine 108 and 127 to 132 (FSKMTF) each bind S-adenosyl-L-methionine.

The protein belongs to the RNA methyltransferase RlmH family. In terms of assembly, homodimer.

It is found in the cytoplasm. The catalysed reaction is pseudouridine(1915) in 23S rRNA + S-adenosyl-L-methionine = N(3)-methylpseudouridine(1915) in 23S rRNA + S-adenosyl-L-homocysteine + H(+). Its function is as follows. Specifically methylates the pseudouridine at position 1915 (m3Psi1915) in 23S rRNA. This is Ribosomal RNA large subunit methyltransferase H from Clostridium beijerinckii (strain ATCC 51743 / NCIMB 8052) (Clostridium acetobutylicum).